A 275-amino-acid chain; its full sequence is Alpha-aminoadipate--LysW ligase LysX (275 aa).

ATP is bound by residues K81, K121, 125 to 131 (GSWGRMV), 161 to 172 (QEFVNKPNRDIR), R186, and N195. The 186-residue stretch at 85–270 (TYILARHNIP…VSKFLLEKAA (186 aa)) folds into the ATP-grasp domain. Mg(2+)-binding residues include D230, E243, and N245. Positions 252 to 253 (NT) match the N-[TS] motif that is essential for LysX substrate specificity motif.

This sequence belongs to the RimK family. LysX subfamily. As to quaternary structure, homodimer. The cofactor is Mg(2+).

The catalysed reaction is [amino-group carrier protein]-C-terminal-L-glutamate + L-2-aminoadipate + ATP = [amino-group carrier protein]-C-terminal-N-(1,4-dicarboxybutan-1-yl)-L-glutamine + ADP + phosphate + H(+). Its pathway is amino-acid biosynthesis; L-lysine biosynthesis via AAA pathway; L-lysine from L-alpha-aminoadipate (Thermus route): step 1/5. Its function is as follows. Catalyzes the ATP-dependent formation of a covalent bond between the amino group of alpha-aminoadipate (AAA) and the gamma-carboxyl group of the C-terminal glutamate residue in LysW. The polypeptide is Alpha-aminoadipate--LysW ligase LysX (lysX) (Saccharolobus solfataricus (strain ATCC 35092 / DSM 1617 / JCM 11322 / P2) (Sulfolobus solfataricus)).